Here is a 454-residue protein sequence, read N- to C-terminus: Notoamide E oxidase notB (454 aa).

The chain crosses the membrane as a helical span at residues 15–35; sequence SPAELTVIIVGLGIAGLTAAI. FAD is bound by residues Glu48 and Gly61. Asn75 carries N-linked (GlcNAc...) asparagine glycosylation. Position 121 (Arg121) interacts with FAD. Catalysis depends on residues Arg199 and Tyr229. FAD contacts are provided by Asp322 and Gly335.

The protein belongs to the paxM FAD-dependent monooxygenase family. FAD serves as cofactor.

The protein localises to the membrane. It carries out the reaction notoamide E + NADPH + O2 + H(+) = notoamide C + NADP(+) + H2O. The catalysed reaction is notoamide E + NADPH + O2 + H(+) = notoamide D + NADP(+) + H2O. It participates in alkaloid biosynthesis. Functionally, FAD-dependent monooxygenase; part of the gene cluster that mediates the biosynthesis of notoamide, a fungal indole alkaloid that belongs to a family of natural products containing a characteristic bicyclo[2.2.2]diazaoctane core. The first step of notoamide biosynthesis involves coupling of L-proline and L-tryptophan by the bimodular NRPS notE, to produce cyclo-L-tryptophan-L-proline called brevianamide F. The reverse prenyltransferase notF then acts as a deoxybrevianamide E synthase and converts brevianamide F to deoxybrevianamide E via reverse prenylation at C-2 of the indole ring leading to the bicyclo[2.2.2]diazaoctane core. Deoxybrevianamide E is further hydroxylated at C-6 of the indole ring, likely catalyzed by the cytochrome P450 monooxygenase notG, to yield 6-hydroxy-deoxybrevianamide E. 6-hydroxy-deoxybrevianamide E is a specific substrate of the prenyltransferase notC for normal prenylation at C-7 to produce 6-hydroxy-7-prenyl-deoxybrevianamide, also called notoamide S. As the proposed pivotal branching point in notoamide biosynthesis, notoamide S can be diverted to notoamide E through an oxidative pyran ring closure putatively catalyzed by either notH cytochrome P450 monooxygenase or the notD FAD-linked oxidoreductase. This step would be followed by an indole 2,3-epoxidation-initiated pinacol-like rearrangement catalyzed by the notB FAD-dependent monooxygenase leading to the formation of notoamide C and notoamide D. On the other hand notoamide S is converted to notoamide T by notH (or notD), a bifunctional oxidase that also functions as the intramolecular Diels-Alderase responsible for generation of (+)-notoamide T. To generate antipodal (-)-notoaminide T, notH' (or notD') in Aspergillus versicolor is expected to catalyze a Diels-Alder reaction leading to the opposite stereochemistry. The remaining oxidoreductase notD (or notH) likely catalyzes the oxidative pyran ring formation to yield (+)-stephacidin A. The FAD-dependent monooxygenase notI is highly similar to notB and is predicted to catalyze a similar conversion from (+)-stephacidin A to (-)-notoamide B via the 2,3-epoxidation of (+)-stephacidin A followed by a pinacol-type rearrangement. Finally, it remains unclear which enzyme could be responsible for the final hydroxylation steps leading to notoamide A and sclerotiamide. This Aspergillus sp. (strain MF297-2) protein is Notoamide E oxidase notB.